We begin with the raw amino-acid sequence, 233 residues long: Protein AC81 (233 aa).

The next 2 membrane-spanning stretches (helical) occupy residues 171 to 191 (SFQT…VEKF) and 194 to 214 (INLL…NYII).

Its subcellular location is the host nucleus. It localises to the host membrane. The protein resides in the virion. Its function is as follows. Plays an essential role in the assembly of nucleocapsids with envelopes. The chain is Protein AC81 (AC81) from Autographa californica nuclear polyhedrosis virus (AcMNPV).